The following is a 778-amino-acid chain: Ribosome biogenesis protein BOP1 homolog (778 aa).

A compositionally biased stretch (basic residues) spans 1-10 (MAKKQDRKRK). A disordered region spans residues 1–152 (MAKKQDRKRK…DSDTSDEEDI (152 aa)). Composition is skewed to acidic residues over residues 44–53 (EDSTDDEGID), 60–72 (SSEDLEFESDEEG), and 84–105 (SSDEEEVDEEEEDDDDDDDEEE). Residues 114–124 (TTSSKAETNNE) are compositionally biased toward polar residues. A compositionally biased stretch (acidic residues) spans 142-151 (EDSDTSDEED). WD repeat units follow at residues 438 to 479 (GHTD…RTIE), 481 to 519 (EDVVRCVAWCPNAKLSIIAVATGSRLLLVNPKVGDKLLI), 564 to 606 (NHFK…SQIP), 609 to 647 (KSKGLIQCVLFHPVKPCFFVATQHNIRIYDLVKQELIKK), 650 to 689 (TNSKWISGMSIHPKGDNLLVSTYDKKMLWFDLDLSTKPYQ), 693 to 732 (LHRNAVRSVAFHLRYPLFASGSDDQAVIVSHGMVYNDLLQ), and 748 to 778 (RDDFGVLDVCWHPVQPWVFSTGADCTIRLYT).

The protein belongs to the WD repeat BOP1/ERB1 family.

It localises to the nucleus. The protein localises to the nucleolus. The protein resides in the nucleoplasm. In terms of biological role, required for maturation of ribosomal RNAs and formation of the large ribosomal subunit. The protein is Ribosome biogenesis protein BOP1 homolog of Drosophila willistoni (Fruit fly).